The primary structure comprises 121 residues: Ribonuclease P protein component (121 aa).

Belongs to the RnpA family. As to quaternary structure, consists of a catalytic RNA component (M1 or rnpB) and a protein subunit.

The enzyme catalyses Endonucleolytic cleavage of RNA, removing 5'-extranucleotides from tRNA precursor.. In terms of biological role, RNaseP catalyzes the removal of the 5'-leader sequence from pre-tRNA to produce the mature 5'-terminus. It can also cleave other RNA substrates such as 4.5S RNA. The protein component plays an auxiliary but essential role in vivo by binding to the 5'-leader sequence and broadening the substrate specificity of the ribozyme. This chain is Ribonuclease P protein component, found in Neisseria meningitidis serogroup B (strain ATCC BAA-335 / MC58).